We begin with the raw amino-acid sequence, 86 residues long: uncharacterized protein (86 aa).

This is an uncharacterized protein from Acidianus bottle-shaped virus (isolate Italy/Pozzuoli) (ABV).